The chain runs to 200 residues: Lipopolysaccharide core heptose(II)-phosphate phosphatase (200 aa).

The signal sequence occupies residues 1 to 25 (MLAFCRSSLKSKKYIIILLALAAIA).

It belongs to the phosphoglycerate mutase family. Ais subfamily.

The protein resides in the periplasm. It functions in the pathway bacterial outer membrane biogenesis; lipopolysaccharide metabolism. Catalyzes the dephosphorylation of heptose(II) of the outer membrane lipopolysaccharide core. The sequence is that of Lipopolysaccharide core heptose(II)-phosphate phosphatase from Escherichia coli (strain ATCC 8739 / DSM 1576 / NBRC 3972 / NCIMB 8545 / WDCM 00012 / Crooks).